The following is a 385-amino-acid chain: Transcription termination factor 2, mitochondrial (385 aa).

The transit peptide at 1 to 35 (MLWKLLLRSQSCRLCSFRKMRSPPKYRPFLACFTY) directs the protein to the mitochondrion.

The protein belongs to the mTERF family. As to quaternary structure, monomer. As to expression, expressed in skeletal muscle, heart, liver and pancreas.

It localises to the mitochondrion. The protein resides in the mitochondrion matrix. Its subcellular location is the mitochondrion nucleoid. In terms of biological role, binds mitochondrial DNA and plays a role in the regulation of transcription of mitochondrial mRNA and rRNA species. The polypeptide is Transcription termination factor 2, mitochondrial (MTERF2) (Homo sapiens (Human)).